The following is a 434-amino-acid chain: RNA polymerase II holoenzyme cyclin-like subunit (434 aa).

The Cyclin N-terminal domain occupies Glu-23–Leu-155. Residues Gly-248–Thr-278 are compositionally biased toward low complexity. 3 disordered regions span residues Gly-248–Glu-292, Leu-301–Asn-320, and Gln-330–Ser-362. Residues Gln-330 to Gly-359 are compositionally biased toward low complexity.

This sequence belongs to the cyclin family. Cyclin C subfamily. In terms of assembly, component of the SRB8-11 complex, a regulatory module of the Mediator complex.

The protein localises to the nucleus. Functionally, component of the SRB8-11 complex. The SRB8-11 complex is a regulatory module of the Mediator complex which is itself involved in regulation of basal and activated RNA polymerase II-dependent transcription. The SRB8-11 complex may be involved in the transcriptional repression of a subset of genes regulated by Mediator. It may inhibit the association of the Mediator complex with RNA polymerase II to form the holoenzyme complex. The SRB8-11 complex phosphorylates the C-terminal domain (CTD) of the largest subunit of RNA polymerase II. In Candida albicans (strain SC5314 / ATCC MYA-2876) (Yeast), this protein is RNA polymerase II holoenzyme cyclin-like subunit (SSN8).